A 392-amino-acid chain; its full sequence is Metacaspase-1 (392 aa).

A compositionally biased stretch (polar residues) spans methionine 1–proline 14. Residues methionine 1–glutamine 87 form a disordered region. A compositionally biased stretch (low complexity) spans glutamine 41–glycine 51. Polar residues predominate over residues asparagine 53–aspartate 63. Residues histidine 182 and cysteine 238 contribute to the active site.

Belongs to the peptidase C14B family.

Its function is as follows. Involved in cell death (apoptosis). The sequence is that of Metacaspase-1 (MCA1) from Candida glabrata (strain ATCC 2001 / BCRC 20586 / JCM 3761 / NBRC 0622 / NRRL Y-65 / CBS 138) (Yeast).